The primary structure comprises 197 residues: Fucoxanthin-chlorophyll a-c binding protein F, chloroplastic (197 aa).

The N-terminal 31 residues, 1 to 31 (MKFAVFASLLASAAAFAPAQQSARTSVATNM), are a transit peptide targeting the chloroplast. Transmembrane regions (helical) follow at residues 73-94 (ISML…PGDI), 114-134 (ISTA…IAVM), and 174-196 (GRAA…SLIP).

The protein belongs to the fucoxanthin chlorophyll protein family. In terms of assembly, the LHC complex of chromophytic algae is composed of fucoxanthin, chlorophyll A and C bound non-covalently by fucoxanthin chlorophyll proteins (FCPs). The ratio of the pigments in lhc; fucoxanthin: chlorophyll C: chlorophyll A is (0.6-1): (0.1-0.3): (1).

It localises to the plastid. The protein localises to the chloroplast thylakoid membrane. In terms of biological role, the light-harvesting complex (LHC) functions as a light receptor, it captures and delivers excitation energy to photosystems with which it is closely associated. In chromophytic algae, LHC is associated with photosystem II, energy being transferred from fucoxanthin and chlorophyll C to chlorophyll A and the photosynthetic reaction centers where it is used to synthesize ATP and reducing power. This is Fucoxanthin-chlorophyll a-c binding protein F, chloroplastic (FCPF) from Phaeodactylum tricornutum (Diatom).